The primary structure comprises 344 residues: Adenine deaminase (344 aa).

Positions 24, 26, and 204 each coordinate Zn(2+). Glutamate 207 serves as the catalytic Proton donor. Zn(2+) is bound at residue aspartate 285. Aspartate 286 is a substrate binding site.

Belongs to the metallo-dependent hydrolases superfamily. Adenosine and AMP deaminases family. Adenine deaminase type 2 subfamily. Requires Zn(2+) as cofactor.

The catalysed reaction is adenine + H2O + H(+) = hypoxanthine + NH4(+). Its function is as follows. Catalyzes the hydrolytic deamination of adenine to hypoxanthine. Plays an important role in the purine salvage pathway and in nitrogen catabolism. The chain is Adenine deaminase from Caulobacter vibrioides (strain ATCC 19089 / CIP 103742 / CB 15) (Caulobacter crescentus).